Consider the following 168-residue polypeptide: Peptidyl-prolyl cis-trans isomerase-like 3 (168 aa).

The 156-residue stretch at 1–156 folds into the PPIase cyclophilin-type domain; the sequence is MSVTLHTNVG…SEIRMTGVTV (156 aa).

This sequence belongs to the cyclophilin-type PPIase family. PPIL3 subfamily.

It carries out the reaction [protein]-peptidylproline (omega=180) = [protein]-peptidylproline (omega=0). PPIases accelerate the folding of proteins. It catalyzes the cis-trans isomerization of proline imidic peptide bonds in oligopeptides. The polypeptide is Peptidyl-prolyl cis-trans isomerase-like 3 (CYP10) (Mycosarcoma maydis (Corn smut fungus)).